Here is a 120-residue protein sequence, read N- to C-terminus: Large ribosomal subunit protein bL17 (120 aa).

It belongs to the bacterial ribosomal protein bL17 family. In terms of assembly, part of the 50S ribosomal subunit. Contacts protein L32.

The protein is Large ribosomal subunit protein bL17 of Geobacillus thermodenitrificans (strain NG80-2).